We begin with the raw amino-acid sequence, 361 residues long: Alcohol dehydrogenase 9 (361 aa).

Residues Cys51, Thr53, His73, Cys104, Cys107, Cys110, Cys118, and Cys167 each contribute to the Zn(2+) site. Residues Thr53 and His73 each contribute to the an alcohol site. Residue Thr53 coordinates NAD(+). NAD(+) contacts are provided by residues 192–197, Lys221, 278–280, and Lys356; these read GLGGLG and LGA.

It belongs to the zinc-containing alcohol dehydrogenase family. Class-III subfamily. As to quaternary structure, homodimer. It depends on Zn(2+) as a cofactor.

The polypeptide is Alcohol dehydrogenase 9 (Catharanthus roseus (Madagascar periwinkle)).